We begin with the raw amino-acid sequence, 423 residues long: Adenylosuccinate synthetase (423 aa).

GTP is bound by residues 12-18 and 40-42; these read GDEGKGK and GHT. Residue Asp-13 is the Proton acceptor of the active site. Residues Asp-13 and Gly-40 each contribute to the Mg(2+) site. Residues 13–16, 38–41, Thr-129, Arg-143, Gln-224, Thr-239, and Arg-303 contribute to the IMP site; these read DEGK and NAGH. Catalysis depends on His-41, which acts as the Proton donor. Residue 299–305 coordinates substrate; sequence ATTGRKR. GTP is bound by residues Arg-305, 331–333, and 412–414; these read KGD and SVG.

This sequence belongs to the adenylosuccinate synthetase family. As to quaternary structure, homodimer. Mg(2+) serves as cofactor.

The protein resides in the cytoplasm. It catalyses the reaction IMP + L-aspartate + GTP = N(6)-(1,2-dicarboxyethyl)-AMP + GDP + phosphate + 2 H(+). It participates in purine metabolism; AMP biosynthesis via de novo pathway; AMP from IMP: step 1/2. Its function is as follows. Plays an important role in the de novo pathway of purine nucleotide biosynthesis. Catalyzes the first committed step in the biosynthesis of AMP from IMP. This chain is Adenylosuccinate synthetase, found in Christiangramia forsetii (strain DSM 17595 / CGMCC 1.15422 / KT0803) (Gramella forsetii).